Consider the following 5654-residue polypeptide: Mucin-5AC (5654 aa).

The N-terminal stretch at 1–27 (MSVGRRKLALLWALALALACTRHTGHA) is a signal peptide. Positions 27–49 (AQDGSSESSYKHHPALSPIARGP) are disordered. Residues 79–249 (RVCSTWGSFH…KMDDPTDQCQ (171 aa)) form the VWFD 1 domain. Intrachain disulfides connect C81-C211 and C103-C248. E198 contacts Cu(2+). N205 and N258 each carry an N-linked (GlcNAc...) asparagine glycan. Positions 320 and 367 each coordinate Cu(2+). The 57-residue stretch at 338-394 (CPNNMQYHECRSPCADTCSNQEHSRACEDHCVAGCFCPEGTVLDDIGQTGCVPVSKC) folds into the TIL 1 domain. The 72-residue stretch at 394–465 (CACVYNGAAY…CSYVLTKPCD (72 aa)) folds into the VWFC 1 domain. Residue N415 is glycosylated (N-linked (GlcNAc...) asparagine). In terms of domain architecture, VWFD 2 spans 432 to 607 (GTCSVLGGAH…NTFKTQAACP (176 aa)). Cystine bridges form between C434/C571, C456/C606, and C478/C486. N-linked (GlcNAc...) asparagine glycosylation occurs at N524. 2 consecutive TIL domains span residues 704–761 (CPKS…ASNC) and 818–863 (DTGA…AEDC). The 172-residue stretch at 901–1072 (ATCAVYGDGH…NSWKLSPSCP (172 aa)) folds into the VWFD 3 domain. Intrachain disulfides connect C903–C1036, C925–C1071, C934–C1033, and C953–C960. N1308 is a glycosylation site (N-linked (GlcNAc...) asparagine). Residues 1336–1377 (LVVSSTHTPSNGPSSAHTGPPSSAWPTTAGTSPRTRLPTASA) form a disordered region. Residues 1338-1377 (VSSTHTPSNGPSSAHTGPPSSAWPTTAGTSPRTRLPTASA) are compositionally biased toward polar residues. The stretch at 1383-1481 (CGEKCLWSPW…RVQCCTPLPC (99 aa)) is one Cys-rich subdomain 1 repeat. The interval 1383–4731 (CGEKCLWSPW…VLCCETPRGC (3349 aa)) is 9 X Cys-rich subdomain repeats. W1389 is a glycosylation site (C-linked (Man) tryptophan). 2 stretches are compositionally biased toward low complexity: residues 1483–1539 (TSSS…TFST) and 1547–1575 (ATST…PSTS). The disordered stretch occupies residues 1483–1575 (TSSSPAQTTP…KPTPTEPSTS (93 aa)). Residues 1577–1677 (CLQELCTWTE…IQCCETVNVC (101 aa)) form a Cys-rich subdomain 2 repeat. Residue W1584 is glycosylated (C-linked (Man) tryptophan). The tract at residues 1688-1733 (ATTRPTPHPTGAQTQTTFTTHMPSASTEQPTATSRGGPTATSVTQG) is disordered. The segment covering 1697-1707 (TGAQTQTTFTT) has biased composition (low complexity). The span at 1708-1733 (HMPSASTEQPTATSRGGPTATSVTQG) shows a compositional bias: polar residues. The Cys-rich subdomain 3 repeat unit spans residues 1743–1847 (CHPRCTWTKW…VLCCETPRGC (105 aa)). W1749 carries C-linked (Man) tryptophan glycosylation. The interval 1849–1948 (MTSTPGSTSS…KPTPTEPSTS (100 aa)) is disordered. 2 stretches are compositionally biased toward low complexity: residues 1850 to 1912 (TSTP…TFST) and 1920 to 1948 (ATST…PSTS). One copy of the Cys-rich subdomain 4 repeat lies at 1950-2050 (CLQELCTWTE…IQCCETVNVC (101 aa)). C-linked (Man) tryptophan glycosylation occurs at W1957. Residues 2059–2110 (TVATTRPTPHPTGAQTQTTFTTHMPSASTEQPTATSRGGPTATSVTQGTHTT) form a disordered region. A compositionally biased stretch (low complexity) spans 2070–2080 (TGAQTQTTFTT). A compositionally biased stretch (polar residues) spans 2081-2110 (HMPSASTEQPTATSRGGPTATSVTQGTHTT). Residues 2116-2220 (CHPRCTWTTW…VLCCETPKGC (105 aa)) form a Cys-rich subdomain 5 repeat. A glycan (C-linked (Man) tryptophan) is linked at W2122. A compositionally biased stretch (low complexity) spans 2224 to 2234 (STPVTAPSTPS). Residues 2224–3214 (STPVTAPSTP…SHVSISKTTH (991 aa)) form a disordered region. A compositionally biased stretch (polar residues) spans 2235–2249 (GRATSPTQSTSSWQK). 2 stretches are compositionally biased toward low complexity: residues 2250-3184 (SRTT…TPGP) and 3192-3214 (PTTS…KTTH). The interval 2257–3200 (TTSTTSTPQT…VPTTSTASVS (944 aa)) is 107 X 8 AA approximate tandem repeats of T-T-S-T-T-S-A-P. Residues T2395, T2405, T2451, T2461, T2531, T2541, T2571, T2581, T2699, T2709, T2883, T2893, T2979, T2989, T3067, and T3077 are each glycosylated (O-linked (GalNAc) threonine). One copy of the Cys-rich subdomain 6 repeat lies at 3222–3326 (CHLRCTWTKW…VLCCETPKGC (105 aa)). W3228 is a glycosylation site (C-linked (Man) tryptophan). Residues 3329 to 3340 (TSTPVTAPSTPS) are compositionally biased toward low complexity. The interval 3329 to 3515 (TSTPVTAPST…SVSKTTHSQP (187 aa)) is disordered. The span at 3341–3355 (GRATSPTQSTSSWQK) shows a compositional bias: polar residues. Positions 3356 to 3513 (SRTTTLVTTS…HVSVSKTTHS (158 aa)) are enriched in low complexity. Residues 3363 to 3498 (TTSTTSTPQT…VTTTSTASVS (136 aa)) are 17 X 8 AA approximate tandem repeats of T-T-S-T-T-S-A-P. One copy of the Cys-rich subdomain 7 repeat lies at 3520 to 3660 (CHPRCTWTKW…WQKSRTTTLV (141 aa)). C-linked (Man) tryptophan glycosylation is present at W3526. The span at 3628–3638 (STSVTAPSTPS) shows a compositional bias: low complexity. A disordered region spans residues 3628-3951 (STSVTAPSTP…KTTHSQPVTR (324 aa)). Over residues 3639 to 3660 (GRATSPTQSTSSWQKSRTTTLV) the composition is skewed to polar residues. The segment at 3661–3931 (TSSITSTTQT…VPTTSTASVS (271 aa)) is 34 X 8 AA approximate tandem repeats of T-T-S-T-T-S-A-P. Residues 3661–3946 (TSSITSTTQT…HVSVSKTTHS (286 aa)) are compositionally biased toward low complexity. An N-linked (GlcNAc...) asparagine glycan is attached at N3774. The Cys-rich subdomain 8 repeat unit spans residues 3953-4057 (CHPRCTWTKW…VLCCETPKGC (105 aa)). The C-linked (Man) tryptophan glycan is linked to W3959. Low complexity predominate over residues 4060-4071 (TSTPVTAPSTPS). The tract at residues 4060–4625 (TSTPVTAPST…KTTHSQPVTS (566 aa)) is disordered. The span at 4072–4088 (GRATSPTQSTSSWQKSR) shows a compositional bias: polar residues. The span at 4089–4610 (TTTLVTTSTT…TTPVSKTSTS (522 aa)) shows a compositional bias: low complexity. Residues 4093-4595 (VTTSTTSTPQ…TSGPGTTPSP (503 aa)) form a 58 X 8 AA approximate tandem repeats of T-T-S-T-T-S-A-P region. O-linked (GalNAc) threonine glycans are attached at residues T4224, T4234, T4296, T4306, T4320, T4330, T4376, T4386, T4440, T4450, T4480, T4490, T4512, T4522, T4568, and T4578. Residues 4611 to 4624 (HLSVSKTTHSQPVT) are compositionally biased toward polar residues. Residues 4627–4731 (CHPLCAWTKW…VLCCETPRGC (105 aa)) form a Cys-rich subdomain 9 repeat. C-linked (Man) tryptophan glycosylation is present at W4633. Positions 4830–4849 (TLPPAPATSPSISTSEPVTE) are disordered. A VWFC 2 domain is found at 4852-4918 (CPNAVPPRKK…DGCCHHYQCQ (67 aa)). 2 N-linked (GlcNAc...) asparagine glycosylation sites follow: N4869 and N4942. A VWFD 4 domain is found at 4919–5103 (CVCSGWGDPH…VSIPDQPACH (185 aa)). 3 cysteine pairs are disulfide-bonded: C4921–C5063, C4943–C5102, and C4967–C4975. N-linked (GlcNAc...) asparagine glycosylation is found at N5057, N5093, and N5236. Residues 5276–5345 (PRCLGPHGEP…GQCCPQYSCA (70 aa)) enclose the VWFC 3 domain. Residues N5347, N5377, N5386, N5455, and N5528 are each glycosylated (N-linked (GlcNAc...) asparagine). Residues 5381–5448 (TVCSINGTLY…QSGQCCGTCV (68 aa)) enclose the VWFC 4 domain. Cystine bridges form between C5532/C5582, C5546/C5596, C5557/C5612, and C5561/C5614. The region spanning 5532-5620 (CAVYHRSLII…ECGCMGRRCP (89 aa)) is the CTCK domain. The N-linked (GlcNAc...) asparagine glycan is linked to N5591. The segment at 5622–5654 (PGDTQHSEEAEPEPSQEAESGSWERGVPVSPMH) is disordered.

As to quaternary structure, homomultimer; disulfide-linked. The N- and C-terminus mediate their assembly into higher order structures to form filaments. The CTCK domains of two polypeptides associate in the endoplasmic reticulum to generate intermolecularly disulfide-bonded dimers. These dimers progress to the Golgi apparatus, which is a more acidic environment than the endoplasmic reticulum. Under acidic conditions, the N-termini form non-covalent intermolecular interactions that juxtapose assemblies from different CTCK-linked dimers to produce long, disulfide-linked polymers that remain highly compact until secretion. Post-translationally, C-, O- and N-glycosylated. O-glycosylated on the second and last Thr of the Thr-/Ser-rich tandem repeats TTPSPVPTTSTTSA. One form of glycosylation is also known as Lewis B (LeB) blood group antigen, a tetrasaccharide consisting of N-acetylglucosamine having a fucosyl residue attached. It has a role as an epitope and antigen and functions as a receptor for H.pylori binding and facilitates infection. C-mannosylation in the Cys-rich subdomains may be required for proper folding of these regions and for export from the endoplasmic reticulum during biosynthesis. In terms of processing, proteolytic cleavage in the C-terminal is initiated early in the secretory pathway and does not involve a serine protease. The extent of cleavage is increased in the acidic parts of the secretory pathway. Cleavage generates a reactive group which could link the protein to a primary amide. As to expression, highly expressed in surface mucosal cells of respiratory tract and stomach epithelia. Overexpressed in a number of carcinomas. Also expressed in Barrett's esophagus epithelium and in the proximal duodenum.

It localises to the secreted. Functionally, gel-forming glycoprotein of gastric and respiratory tract epithelia that protects the mucosa from infection and chemical damage by binding to inhaled microorganisms and particles that are subsequently removed by the mucociliary system. Interacts with H.pylori in the gastric epithelium, Barrett's esophagus as well as in gastric metaplasia of the duodenum (GMD). This Homo sapiens (Human) protein is Mucin-5AC.